The chain runs to 698 residues: Probable xyloglucan glycosyltransferase 2 (698 aa).

Helical transmembrane passes span 124–144 and 190–210; these read GFLALSLLALAVELAAYWNGW and ILLFVIQSMDRLVLCLGCFWI. Residue D272 is part of the active site. Substrate is bound by residues D331 and D333. D425 is an active-site residue. The next 4 helical transmembrane spans lie at 503–523, 528–548, 653–668, and 673–693; these read LILPFYSFTLFCVILPLTMFV, LPVWVICYVPVCMSFLNILPS, LALSLLLLTAATRSLL, and IHFYFLLFQGVSFLFVGLDLI.

It belongs to the glycosyltransferase 2 family. Plant cellulose synthase-like C subfamily.

The protein resides in the golgi apparatus membrane. Functionally, probable beta-1,4-glucan synthase rather involved in the synthesis of the xyloglucan backbone than cellulose. Seems to work simultaneously with xyloglucan 6-xylosyltransferase. Xyloglucan is a noncellulosic polysaccharides of plant cell wall and consists of a glucan backbone substituted by xylose, galactose and fucose. The protein is Probable xyloglucan glycosyltransferase 2 (CSLC2) of Oryza sativa subsp. japonica (Rice).